The primary structure comprises 853 residues: DNA mismatch repair protein MutS (853 aa).

Residue Gly613–Ser620 coordinates ATP.

It belongs to the DNA mismatch repair MutS family.

In terms of biological role, this protein is involved in the repair of mismatches in DNA. It is possible that it carries out the mismatch recognition step. This protein has a weak ATPase activity. The protein is DNA mismatch repair protein MutS of Vibrio parahaemolyticus serotype O3:K6 (strain RIMD 2210633).